Consider the following 92-residue polypeptide: Small ribosomal subunit protein uS17 (92 aa).

The protein belongs to the universal ribosomal protein uS17 family. In terms of assembly, part of the 30S ribosomal subunit.

In terms of biological role, one of the primary rRNA binding proteins, it binds specifically to the 5'-end of 16S ribosomal RNA. This chain is Small ribosomal subunit protein uS17, found in Cupriavidus metallidurans (strain ATCC 43123 / DSM 2839 / NBRC 102507 / CH34) (Ralstonia metallidurans).